A 349-amino-acid polypeptide reads, in one-letter code: DNA replication and repair protein RecF (349 aa).

Residue 30–37 (GKNGSGKT) participates in ATP binding.

Belongs to the RecF family.

The protein localises to the cytoplasm. In terms of biological role, the RecF protein is involved in DNA metabolism; it is required for DNA replication and normal SOS inducibility. RecF binds preferentially to single-stranded, linear DNA. It also seems to bind ATP. The chain is DNA replication and repair protein RecF from Francisella tularensis subsp. tularensis (strain FSC 198).